Here is a 91-residue protein sequence, read N- to C-terminus: Acylphosphatase (91 aa).

One can recognise an Acylphosphatase-like domain in the interval 5-91 (RAHLRIYGRV…EGLEGFKVVG (87 aa)). Active-site residues include Arg20 and Asn38.

Belongs to the acylphosphatase family.

The enzyme catalyses an acyl phosphate + H2O = a carboxylate + phosphate + H(+). This Thermococcus kodakarensis (strain ATCC BAA-918 / JCM 12380 / KOD1) (Pyrococcus kodakaraensis (strain KOD1)) protein is Acylphosphatase (acyP).